We begin with the raw amino-acid sequence, 192 residues long: Ion-translocating oxidoreductase complex subunit A (192 aa).

Transmembrane regions (helical) follow at residues 5 to 25, 39 to 59, 63 to 83, 102 to 122, 134 to 154, and 171 to 191; these read ILLI…FLGL, VGMG…AYLV, ILIP…VIAV, LLGI…VALL, VVYG…FAAL, and AIAL…TGLV.

Belongs to the NqrDE/RnfAE family. The complex is composed of six subunits: RnfA, RnfB, RnfC, RnfD, RnfE and RnfG.

The protein localises to the cell inner membrane. In terms of biological role, part of a membrane-bound complex that couples electron transfer with translocation of ions across the membrane. This chain is Ion-translocating oxidoreductase complex subunit A, found in Haemophilus influenzae (strain 86-028NP).